Here is a 517-residue protein sequence, read N- to C-terminus: MSPLALVSVSDKKNIIQFCKELIENFNYKILSSGGTAKHLIEAKIPVIKVADFTNSQEILGGRVKTLHPKIHGGILAKRTDEEHQIDIKANDLELIDLVVVNLYPFKKTIDQGAKWEDAIENIDIGGPSMIRSAAKNHKYVSVLVDPSQYQNFLEESKKGELKESYKAKLALEAFQHTADYDTAISNWISKERGFQSSKHIKSYPLIKSLRYGENPHQKAFWYGLSNIGWNSAKQLQGKDLSYNNLLDLESALTTVLEFGYAEKDELTTDTFASIILKHNNPCGASVSNSASQAFLNALECDSVSAFGGIVAFNSNVDSETAIQLKDIFLECVVAPSFDEKALEILKVKKNLRILKLSKDQLPKNNQTSTKSIMGGLLVQDTDDNKEKSEGWISVTNKNPSNQMNLDLNFAWKICKHVKSNAIVIAKDQKTIGIGAGQMNRVGAAKIALKAAGKLCSGAVLASDGFFPFADTVELANEYGIKAIIQPGGSLRDQESIDMCNAKGIAMIFTQKRHFLH.

One can recognise an MGS-like domain in the interval Met-1–Val-145.

Belongs to the PurH family.

The enzyme catalyses (6R)-10-formyltetrahydrofolate + 5-amino-1-(5-phospho-beta-D-ribosyl)imidazole-4-carboxamide = 5-formamido-1-(5-phospho-D-ribosyl)imidazole-4-carboxamide + (6S)-5,6,7,8-tetrahydrofolate. It carries out the reaction IMP + H2O = 5-formamido-1-(5-phospho-D-ribosyl)imidazole-4-carboxamide. The protein operates within purine metabolism; IMP biosynthesis via de novo pathway; 5-formamido-1-(5-phospho-D-ribosyl)imidazole-4-carboxamide from 5-amino-1-(5-phospho-D-ribosyl)imidazole-4-carboxamide (10-formyl THF route): step 1/1. It participates in purine metabolism; IMP biosynthesis via de novo pathway; IMP from 5-formamido-1-(5-phospho-D-ribosyl)imidazole-4-carboxamide: step 1/1. This chain is Bifunctional purine biosynthesis protein PurH, found in Prochlorococcus marinus (strain MIT 9215).